The chain runs to 131 residues: Profilin (131 aa).

This sequence belongs to the profilin family. Occurs in many kinds of cells as a complex with monomeric actin in a 1:1 ratio.

It localises to the cytoplasm. The protein resides in the cytoskeleton. Binds to actin and affects the structure of the cytoskeleton. At high concentrations, profilin prevents the polymerization of actin, whereas it enhances it at low concentrations. By binding to PIP2, it inhibits the formation of IP3 and DG. This is Profilin from Prunus persica (Peach).